The chain runs to 688 residues: Glycine--tRNA ligase beta subunit (688 aa).

It belongs to the class-II aminoacyl-tRNA synthetase family. As to quaternary structure, tetramer of two alpha and two beta subunits.

The protein localises to the cytoplasm. It catalyses the reaction tRNA(Gly) + glycine + ATP = glycyl-tRNA(Gly) + AMP + diphosphate. The sequence is that of Glycine--tRNA ligase beta subunit from Shewanella sp. (strain MR-7).